Reading from the N-terminus, the 502-residue chain is UPF0371 protein CLH_2534 (502 aa).

The protein belongs to the UPF0371 family.

The chain is UPF0371 protein CLH_2534 from Clostridium botulinum (strain Alaska E43 / Type E3).